The sequence spans 480 residues: Ribosome assembly protein rrb1 (480 aa).

Disordered regions lie at residues 1-78 and 155-176; these read MSKR…WLPG and QHDENDDASDNSDVEEDPILEH. Composition is skewed to acidic residues over residues 28 to 52 and 158 to 172; these read VDTEMGEFEDAYEDEIESEEEYIEA and ENDDASDNSDVEEDP. Phosphoserine occurs at positions 163 and 166. WD repeat units lie at residues 183–225, 289–329, 334–375, 385–425, and 446–480; these read GACN…RSLD, SHTA…KTSA, AHPG…SSSS, WHRA…DEEE, and MGQQEIKEMHWHRQIPGTIVSTAMTGINVFKTITF.

In terms of assembly, associates with ribosomal protein L3.

It is found in the cytoplasm. It localises to the nucleus. The protein localises to the nucleolus. Its function is as follows. Involved in regulation of L3 expression and stability and plays a role in early 60S ribosomal subunit assembly. May be required for proper assembly of pre-ribosomal particles during early ribosome biogenesis, presumably by targeting L3 onto the 35S precursor rRNA. This Schizosaccharomyces pombe (strain 972 / ATCC 24843) (Fission yeast) protein is Ribosome assembly protein rrb1 (rrb1).